The chain runs to 298 residues: N-acetylmuramic acid 6-phosphate etherase (298 aa).

Residues 55-218 (IHAQVSGGGR…STGLMIKSGK (164 aa)) form the SIS domain. E83 serves as the catalytic Proton donor. E114 is an active-site residue.

It belongs to the GCKR-like family. MurNAc-6-P etherase subfamily. As to quaternary structure, homodimer.

It carries out the reaction N-acetyl-D-muramate 6-phosphate + H2O = N-acetyl-D-glucosamine 6-phosphate + (R)-lactate. It participates in amino-sugar metabolism; 1,6-anhydro-N-acetylmuramate degradation. The protein operates within amino-sugar metabolism; N-acetylmuramate degradation. Its pathway is cell wall biogenesis; peptidoglycan recycling. Functionally, specifically catalyzes the cleavage of the D-lactyl ether substituent of MurNAc 6-phosphate, producing GlcNAc 6-phosphate and D-lactate. Together with AnmK, is also required for the utilization of anhydro-N-acetylmuramic acid (anhMurNAc) either imported from the medium or derived from its own cell wall murein, and thus plays a role in cell wall recycling. The polypeptide is N-acetylmuramic acid 6-phosphate etherase (Shigella flexneri).